The primary structure comprises 214 residues: Small ribosomal subunit protein uS5 (214 aa).

The disordered stretch occupies residues 1 to 61 (MTDSSPQSNP…QERDSEWQER (61 aa)). A compositionally biased stretch (low complexity) spans 9–29 (NPNAVPGAADVPAAAEGQQQQ). Residues 30 to 60 (EQRRGRGDRDGRRGDRRGGRRGQERDSEWQE) show a composition bias toward basic and acidic residues. Residues 58-121 (WQERVVQIRR…ADGKKHLVKV (64 aa)) enclose the S5 DRBM domain.

It belongs to the universal ribosomal protein uS5 family. In terms of assembly, part of the 30S ribosomal subunit. Contacts proteins S4 and S8.

With S4 and S12 plays an important role in translational accuracy. In terms of biological role, located at the back of the 30S subunit body where it stabilizes the conformation of the head with respect to the body. The protein is Small ribosomal subunit protein uS5 of Synechococcus sp. (strain CC9605).